Consider the following 61-residue polypeptide: Metallothionein-1L (61 aa).

A beta region spans residues 1 to 29 (MDPNCSCATGGSCSCASSCKCKECKCTSC). C5, C7, C13, C15, C19, C21, C24, C26, C29, C33, C34, C36, C37, C41, C44, C48, C50, C57, C59, and C60 together coordinate a divalent metal cation. The alpha stretch occupies residues 30-61 (KKSCCSCCPMGCAKCAQGCVCKGASEKCSCCA).

It belongs to the metallothionein superfamily. Type 1 family. In terms of assembly, monomer. In terms of tissue distribution, expressed in reticulocytes.

Its function is as follows. Metallothioneins have a high content of cysteine residues that bind various heavy metals; these proteins are transcriptionally regulated by both heavy metals and glucocorticoids. This Homo sapiens (Human) protein is Metallothionein-1L (MT1L).